The sequence spans 87 residues: Cell division protein FtsL (87 aa).

Residues 1 to 6 (MNKSNF) are Cytoplasmic-facing. The chain crosses the membrane as a helical span at residues 7–23 (FLLLAVCVSAFSVVMQQ). At 24 to 87 (NQYRLNFTAL…GNTFMVEHQR (64 aa)) the chain is on the periplasmic side. Residues 31–71 (TALDKAKKQEIALEQDYAQMRLQQARLANHEAIRAAAEKQN) are a coiled coil. The disordered stretch occupies residues 68-87 (EKQNLHPPVSGNTFMVEHQR).

Belongs to the FtsL family. As to quaternary structure, part of a complex composed of FtsB, FtsL and FtsQ.

The protein resides in the cell inner membrane. Its function is as follows. Essential cell division protein. May link together the upstream cell division proteins, which are predominantly cytoplasmic, with the downstream cell division proteins, which are predominantly periplasmic. The protein is Cell division protein FtsL of Neisseria gonorrhoeae (strain ATCC 700825 / FA 1090).